The sequence spans 183 residues: Peptide deformylase (183 aa).

Residues Cys-110 and His-153 each contribute to the Fe cation site. Residue Glu-154 is part of the active site. A Fe cation-binding site is contributed by His-157.

This sequence belongs to the polypeptide deformylase family. Requires Fe(2+) as cofactor.

The catalysed reaction is N-terminal N-formyl-L-methionyl-[peptide] + H2O = N-terminal L-methionyl-[peptide] + formate. Its function is as follows. Removes the formyl group from the N-terminal Met of newly synthesized proteins. Requires at least a dipeptide for an efficient rate of reaction. N-terminal L-methionine is a prerequisite for activity but the enzyme has broad specificity at other positions. The sequence is that of Peptide deformylase from Shouchella clausii (strain KSM-K16) (Alkalihalobacillus clausii).